The sequence spans 320 residues: Glutaminase (320 aa).

Substrate is bound by residues S70, N121, E165, N172, Y196, Y248, and V266.

This sequence belongs to the glutaminase family. In terms of assembly, homotetramer.

It catalyses the reaction L-glutamine + H2O = L-glutamate + NH4(+). This is Glutaminase from Mycobacterium marinum (strain ATCC BAA-535 / M).